The following is a 189-amino-acid chain: MKTLAPSYLKHQFLIAMPHMADPNFAQTLTYIVEHNANGAMGLVVNRPQELNLADILEQLRPDEEPPASTLQVPIYQGGPVQTDRGFVLHSSECSYQATVELQGLSLSTSQDVLFAIAEGVGPQKSLITLGYAGWEAGQLEAELADNAWLNCPFDPDIIFGLASEQRLGAAAASLGINLSLLTSQAGHA.

It belongs to the UPF0301 (AlgH) family.

This Pseudomonas putida (strain W619) protein is UPF0301 protein PputW619_0469.